The chain runs to 346 residues: Secreted frizzled-related protein 4 (346 aa).

The first 18 residues, 1-18 (MFLSILVALCLWLHLALG), serve as a signal peptide directing secretion. One can recognise an FZ domain in the interval 19-139 (VRGAPCEAVR…VYDRGVCISP (121 aa)). Cystine bridges form between Cys24/Cys85, Cys32/Cys78, Cys69/Cys108, Cys97/Cys136, and Cys101/Cys125. 2 N-linked (GlcNAc...) asparagine glycosylation sites follow: Asn38 and Asn68. N-linked (GlcNAc...) asparagine glycosylation is found at Asn116, Asn194, and Asn240. Residues 178–307 (CKCKKVKPTL…IQDKKKTAGR (130 aa)) form the NTR domain. The segment covering 294 to 303 (QRRTIQDKKK) has biased composition (basic and acidic residues). The tract at residues 294 to 346 (QRRTIQDKKKTAGRTSRSNPPKPKGKPPAPKPASPKKNIKTRSAQKKTNPKKV) is disordered. Residues 313–326 (PPKPKGKPPAPKPA) are compositionally biased toward pro residues. The span at 330–346 (KNIKTRSAQKKTNPKKV) shows a compositional bias: basic residues.

This sequence belongs to the secreted frizzled-related protein (sFRP) family.

It is found in the secreted. Functionally, soluble frizzled-related proteins (sFRPS) function as modulators of Wnt signaling through direct interaction with Wnts. They have a role in regulating cell growth and differentiation in specific cell types. SFRP4 plays a role in bone morphogenesis. May also act as a regulator of adult uterine morphology and function. May also increase apoptosis during ovulation possibly through modulation of FZ1/FZ4/WNT4 signaling. Has phosphaturic effects by specifically inhibiting sodium-dependent phosphate uptake. The chain is Secreted frizzled-related protein 4 (SFRP4) from Macaca mulatta (Rhesus macaque).